A 207-amino-acid chain; its full sequence is Outer-membrane lipoprotein carrier protein (207 aa).

An N-terminal signal peptide occupies residues 1 to 21 (MRLIRMLLATALTFSVIPAHA).

Belongs to the LolA family. As to quaternary structure, monomer.

It is found in the periplasm. Its function is as follows. Participates in the translocation of lipoproteins from the inner membrane to the outer membrane. Only forms a complex with a lipoprotein if the residue after the N-terminal Cys is not an aspartate (The Asp acts as a targeting signal to indicate that the lipoprotein should stay in the inner membrane). The protein is Outer-membrane lipoprotein carrier protein of Pseudomonas syringae pv. tomato (strain ATCC BAA-871 / DC3000).